The chain runs to 476 residues: Probable serine carboxypeptidase CPVL (476 aa).

Residues 1 to 22 (MVGAMWKVIVSLVLLMPGPCDG) form the signal peptide. N-linked (GlcNAc...) asparagine glycosylation is found at Asn-81 and Asn-132. Residue Ser-204 is part of the active site. 2 N-linked (GlcNAc...) asparagine glycosylation sites follow: Asn-307 and Asn-346. Active-site residues include Asp-388 and His-448.

Belongs to the peptidase S10 family. Expressed in macrophages but not in other leukocytes. Abundantly expressed in heart and kidney. Also expressed in spleen, leukocytes, and placenta.

Functionally, may be involved in the digestion of phagocytosed particles in the lysosome, participation in an inflammatory protease cascade, and trimming of peptides for antigen presentation. In Homo sapiens (Human), this protein is Probable serine carboxypeptidase CPVL (CPVL).